Reading from the N-terminus, the 194-residue chain is Endoribonuclease ToxN (194 aa).

Residues 114 to 182 (MLKQYLFLKE…DQAKERDKAR (69 aa)) are a coiled coil. Over residues 171-182 (ERDQAKERDKAR) the composition is skewed to basic and acidic residues. The disordered stretch occupies residues 171 to 194 (ERDQAKERDKARRIAYMRQMGRER).

The protein belongs to the ToxN/AbiQ toxin family. One ToxN monomer binds to a 34-nt-long single repeat of the ToxI RNA; this complex forms a triangular heterohexameric complex with ToxN connected by the ToxI RNA to another toxin molecule. The ToxI repeats are cleavage products of their precursor. The ToxI repeat forms a pseudoknot which occludes the toxin active site.

In terms of biological role, toxic component of a type III toxin-antitoxin (TA) system. An endoribonuclease which cleaves between the first and second A of AAAAA sequences; it tolerates other nucleotides in positions +2 and +4 of the consensus. Digests cognate antitoxin RNA ToxI as shown by the 2'-3'-cyclic phosphate at the 3' end of the 34-nt repeats and probably other RNAs. Inhibits growth when expressed in E.coli without causing cell lysis; this bacteriostatic effect is neutralized by cognate RNA antitoxin ToxI, which has 2.9 nearly identical 34 nucleotide-long repeats. Non-cognate antitoxin RNA from P.atrosepticum does not inhibit this toxin. The toxin-antitoxin pair function in plasmid maintenance (a plasmid addiction system), but unlike its P.atrosepticum homolog it is not seen to confer resistance to bacteriophages. The chain is Endoribonuclease ToxN from Bacillus thuringiensis subsp. kurstaki.